A 1408-amino-acid chain; its full sequence is DNA-directed RNA polymerase subunit beta' (1408 aa).

Zn(2+) is bound by residues cysteine 70, cysteine 72, cysteine 85, and cysteine 88. Mg(2+) contacts are provided by aspartate 460, aspartate 462, and aspartate 464. Residues cysteine 814, cysteine 888, cysteine 895, and cysteine 898 each contribute to the Zn(2+) site.

The protein belongs to the RNA polymerase beta' chain family. The RNAP catalytic core consists of 2 alpha, 1 beta, 1 beta' and 1 omega subunit. When a sigma factor is associated with the core the holoenzyme is formed, which can initiate transcription. The cofactor is Mg(2+). It depends on Zn(2+) as a cofactor.

It catalyses the reaction RNA(n) + a ribonucleoside 5'-triphosphate = RNA(n+1) + diphosphate. Its function is as follows. DNA-dependent RNA polymerase catalyzes the transcription of DNA into RNA using the four ribonucleoside triphosphates as substrates. The sequence is that of DNA-directed RNA polymerase subunit beta' from Serratia proteamaculans (strain 568).